The sequence spans 385 residues: Mannitol-1-phosphate 5-dehydrogenase (385 aa).

3–14 (ALQFGAGNIGRG) serves as a coordination point for NAD(+).

This sequence belongs to the mannitol dehydrogenase family.

It catalyses the reaction D-mannitol 1-phosphate + NAD(+) = beta-D-fructose 6-phosphate + NADH + H(+). The sequence is that of Mannitol-1-phosphate 5-dehydrogenase from Buchnera aphidicola subsp. Acyrthosiphon pisum (strain 5A).